Reading from the N-terminus, the 134-residue chain is MGSLNVSIVTPDGPVYEGVAQMVIARTKAGELGILPGHVPLVAPLKIDIVRLKVESGEEWVAVNGGFMEVNGEEVNILADTAEREQDIDIDRAEKAKQRAEEELSRAKEQKVDEVMAQLALQRAINRIHAKEHN.

Belongs to the ATPase epsilon chain family. As to quaternary structure, F-type ATPases have 2 components, CF(1) - the catalytic core - and CF(0) - the membrane proton channel. CF(1) has five subunits: alpha(3), beta(3), gamma(1), delta(1), epsilon(1). CF(0) has three main subunits: a, b and c.

The protein resides in the cell membrane. Produces ATP from ADP in the presence of a proton gradient across the membrane. In Listeria monocytogenes serotype 4b (strain F2365), this protein is ATP synthase epsilon chain.